The primary structure comprises 890 residues: Possible lysine-specific histone demethylase 1 (890 aa).

Polar residues predominate over residues 1–13 (MKPTQFGGSSSKM). The disordered stretch occupies residues 1 to 164 (MKPTQFGGSS…TVLSGQEGAV (164 aa)). Residues Ser-24 and Ser-27 each carry the phosphoserine modification. Residues 84–109 (NRPSGSGDTASNDKSGSASMGPNNQQ) show a composition bias toward polar residues. A compositionally biased stretch (basic and acidic residues) spans 110 to 122 (AERRSQSQTRKSE). Over residues 123–138 (ANATSSSVSGPSAGNS) the composition is skewed to low complexity. The region spanning 160 to 259 (QEGAVFQSRL…FGIFKRLKPI (100 aa)) is the SWIRM domain. 267–295 (VIVIGAGISGLAVAHQLQQFGMDVIVLEA) lines the FAD pocket. A disordered region spans residues 860-890 (DLSPNLSDSSPSSKKSEENSNSNTADSTELQ). Over residues 861 to 882 (LSPNLSDSSPSSKKSEENSNSN) the composition is skewed to low complexity. Ser-866 is subject to Phosphoserine.

Belongs to the flavin monoamine oxidase family. In terms of assembly, component of a complex that contains at least HDAC1/Rpd3, CoRest and Su(var)3-3/Hdm. Requires FAD as cofactor.

It localises to the nucleus. The protein resides in the chromosome. Functionally, probable histone demethylase that specifically demethylates 'Lys-4' of histone H3, a specific tag for epigenetic transcriptional activation, thereby acting as a corepressor. Required for heterochromatic gene silencing. Acts by oxidizing the substrate by FAD to generate the corresponding imine that is subsequently hydrolyzed. Demethylates both mono- and tri-methylated 'Lys-4' of histone H3. May also demethylate 'Lys-9' of histone H3, Plays a role in the repression of neuronal genes. The polypeptide is Possible lysine-specific histone demethylase 1 (Su(var)3-3) (Drosophila melanogaster (Fruit fly)).